Here is a 120-residue protein sequence, read N- to C-terminus: FK506-binding protein 1B (120 aa).

Positions 1-26 (MGLEKQTLRMGNGKDHPQPGDPVELN) are disordered. One can recognise a PPIase FKBP-type domain in the interval 20 to 115 (GDPVELNYTG…VFEVELLKIK (96 aa)).

It belongs to the FKBP-type PPIase family. FKBP1 subfamily.

It carries out the reaction [protein]-peptidylproline (omega=180) = [protein]-peptidylproline (omega=0). With respect to regulation, inhibited by both FK506 and rapamycin. PPIases accelerate the folding of proteins. It catalyzes the cis-trans isomerization of proline imidic peptide bonds in oligopeptides. In Aspergillus fumigatus (strain ATCC MYA-4609 / CBS 101355 / FGSC A1100 / Af293) (Neosartorya fumigata), this protein is FK506-binding protein 1B (fpr1B).